A 372-amino-acid chain; its full sequence is 4-hydroxy-3-methylbut-2-en-1-yl diphosphate synthase (flavodoxin) (372 aa).

[4Fe-4S] cluster is bound by residues C270, C273, C305, and E312.

Belongs to the IspG family. The cofactor is [4Fe-4S] cluster.

The catalysed reaction is (2E)-4-hydroxy-3-methylbut-2-enyl diphosphate + oxidized [flavodoxin] + H2O + 2 H(+) = 2-C-methyl-D-erythritol 2,4-cyclic diphosphate + reduced [flavodoxin]. It functions in the pathway isoprenoid biosynthesis; isopentenyl diphosphate biosynthesis via DXP pathway; isopentenyl diphosphate from 1-deoxy-D-xylulose 5-phosphate: step 5/6. Its function is as follows. Converts 2C-methyl-D-erythritol 2,4-cyclodiphosphate (ME-2,4cPP) into 1-hydroxy-2-methyl-2-(E)-butenyl 4-diphosphate. The sequence is that of 4-hydroxy-3-methylbut-2-en-1-yl diphosphate synthase (flavodoxin) from Vibrio parahaemolyticus serotype O3:K6 (strain RIMD 2210633).